Consider the following 729-residue polypeptide: 1,4-alpha-glucan branching enzyme GlgB 2 (729 aa).

Catalysis depends on Asp408, which acts as the Nucleophile. The active-site Proton donor is the Glu461.

It belongs to the glycosyl hydrolase 13 family. GlgB subfamily. In terms of assembly, monomer.

The catalysed reaction is Transfers a segment of a (1-&gt;4)-alpha-D-glucan chain to a primary hydroxy group in a similar glucan chain.. It participates in glycan biosynthesis; glycogen biosynthesis. Its function is as follows. Catalyzes the formation of the alpha-1,6-glucosidic linkages in glycogen by scission of a 1,4-alpha-linked oligosaccharide from growing alpha-1,4-glucan chains and the subsequent attachment of the oligosaccharide to the alpha-1,6 position. This Xanthomonas campestris pv. campestris (strain 8004) protein is 1,4-alpha-glucan branching enzyme GlgB 2.